Consider the following 154-residue polypeptide: Myoglobin (154 aa).

The Globin domain maps to 2–148; that stretch reads GLSDGEWQLV…FRHDMAAKYK (147 aa). Residue serine 4 is modified to Phosphoserine. Histidine 65 is a nitrite binding site. Histidine 65 serves as a coordination point for O2. Residue threonine 68 is modified to Phosphothreonine. Histidine 94 contributes to the heme b binding site.

This sequence belongs to the globin family. As to quaternary structure, monomeric.

It localises to the cytoplasm. The protein localises to the sarcoplasm. The enzyme catalyses Fe(III)-heme b-[protein] + nitric oxide + H2O = Fe(II)-heme b-[protein] + nitrite + 2 H(+). The catalysed reaction is H2O2 + AH2 = A + 2 H2O. Functionally, monomeric heme protein which primary function is to store oxygen and facilitate its diffusion within muscle tissues. Reversibly binds oxygen through a pentacoordinated heme iron and enables its timely and efficient release as needed during periods of heightened demand. Depending on the oxidative conditions of tissues and cells, and in addition to its ability to bind oxygen, it also has a nitrite reductase activity whereby it regulates the production of bioactive nitric oxide. Under stress conditions, like hypoxia and anoxia, it also protects cells against reactive oxygen species thanks to its pseudoperoxidase activity. This Osphranter rufus (Red kangaroo) protein is Myoglobin (MB).